Here is a 66-residue protein sequence, read N- to C-terminus: COP-associated protein (66 aa).

The HMA domain occupies 1–66 (MKATFQVPSI…ALLDAGQEVV (66 aa)). Positions 12 and 15 each coordinate Cu cation. Cysteine 12 and cysteine 15 are joined by a disulfide.

Functionally, part of a cation-transporting system which is associated with copper export out of the H.pylori cells. This is COP-associated protein (copP) from Helicobacter pylori (strain ATCC 700392 / 26695) (Campylobacter pylori).